Consider the following 268-residue polypeptide: uncharacterized protein (268 aa).

3 consecutive transmembrane segments (helical) span residues 169 to 189 (AIIY…QGFA), 190 to 210 (GVKT…LWLL), and 225 to 245 (IFAG…LSVF).

Its subcellular location is the cell membrane. This is an uncharacterized protein from Bacillus subtilis (strain 168).